The following is an 803-amino-acid chain: Ribonucleoside-diphosphate reductase large chain (803 aa).

One can recognise an ATP-cone domain in the interval 1 to 91 (MYVVNRKGEE…TSNLHKNTSS (91 aa)). ATP-binding positions include 5–6 (NR), 11–17 (EPVSFDQ), threonine 52, and aspartate 56. GDP is bound at residue serine 215. Cysteine 216 and cysteine 442 form a disulfide bridge. DTTP is bound by residues 224-226 (DSI), lysine 241, arginine 254, and 261-262 (RG). Asparagine 425 lines the GDP pocket. The active-site Proton acceptor is asparagine 425. Catalysis depends on cysteine 427, which acts as the Cysteine radical intermediate. Residues glutamate 429 and 604 to 607 (TAST) contribute to the GDP site. Residue glutamate 429 is the Proton acceptor of the active site.

Belongs to the ribonucleoside diphosphate reductase large chain family. Heterodimer of a large and a small subunit.

It carries out the reaction a 2'-deoxyribonucleoside 5'-diphosphate + [thioredoxin]-disulfide + H2O = a ribonucleoside 5'-diphosphate + [thioredoxin]-dithiol. Under complex allosteric control mediated by deoxynucleoside triphosphates and ATP binding to separate specificity and activation sites on the large subunit. The type of nucleotide bound at the specificity site determines substrate preference. It seems probable that ATP makes the enzyme reduce CDP and UDP, dGTP favors ADP reduction and dTTP favors GDP reduction. Stimulated by ATP and inhibited by dATP binding to the activity site. Functionally, provides the precursors necessary for DNA synthesis. Catalyzes the biosynthesis of deoxyribonucleotides from the corresponding ribonucleotides. The chain is Ribonucleoside-diphosphate reductase large chain (RNR1) from Cryptosporidium parvum.